The sequence spans 224 residues: uncharacterized protein (224 aa).

A signal peptide spans 1–30 (MSRSSSSMATVLVVLMVVSAGGLSPPCAAA). N-linked (GlcNAc...) asparagine glycosylation is present at N141.

It localises to the secreted. This is an uncharacterized protein from Oryza sativa subsp. japonica (Rice).